Consider the following 405-residue polypeptide: Growth/differentiation factor 11 (405 aa).

The first 20 residues, 1-20 (MVLAAPLLLGFLLLALELRP), serve as a signal peptide directing secretion. A propeptide spanning residues 21–296 (RGEAAEGPAA…VLENTKRSRR (276 aa)) is cleaved from the precursor. N-linked (GlcNAc...) asparagine glycosylation occurs at Asn92. 4 disulfide bridges follow: Cys302–Cys312, Cys311–Cys370, Cys339–Cys402, and Cys343–Cys404.

It belongs to the TGF-beta family. As to quaternary structure, homodimer; disulfide-linked. Interacts directly with ACVR2B. Interacts directly with ACVR2A. Interacts with ACVR1B, TGFBR1 and ACVR1C in an ACVR2B-dependent manner. Interacts with FST isoform 2/FS288. Post-translationally, synthesized as large precursor molecule that undergoes proteolytic cleavage by furin-like proteases. This produces an inactive form consisting of the mature C-terminal portion non-covalently bound to its cleaved N-terminal propeptide. Activation of the mature form requires additional cleavage of the propeptide by a tolloid-like metalloproteinase. As to expression, highly expressed in the developing limb bud, initially detected in the distal mesenchyme, and later localizing to regions around the developing bones. Is also expressed in adult dental pulp and brain.

It localises to the secreted. In terms of biological role, secreted signal that acts globally to regulate anterior/posterior axial patterning during development. May play critical roles in patterning both mesodermal and neural tissues. It is required for proper vertebral patterning and orofacial development. Signals through activin receptors type-2, ACVR2A and ACVR2B, and activin receptors type-1, ACVR1B, ACVR1C and TGFBR1 leading to the phosphorylation of SMAD2 and SMAD3. This Mus musculus (Mouse) protein is Growth/differentiation factor 11 (Gdf11).